A 352-amino-acid chain; its full sequence is Protein YpbB (352 aa).

In terms of assembly, interacts with RecS and SSB (ssbA); the 6 C-terminal residues of SSB are required for interaction with YpbB.

It localises to the cytoplasm. The protein resides in the nucleoid. This chain is Protein YpbB (ypbB), found in Bacillus subtilis (strain 168).